We begin with the raw amino-acid sequence, 199 residues long: Neurotrophic factor BDNF precursor form (199 aa).

A disordered region spans residues 1–23; it reads GQGSLAYPGLRTQGNLETLSGPN. The propeptide occupies 1–100; it reads GQGSLAYPGL…AANMSMRVRR (100 aa). The span at 12–23 shows a compositional bias: polar residues; that stretch reads TQGNLETLSGPN. A glycan (N-linked (GlcNAc...) asparagine) is linked at asparagine 93. Cysteines 113 and 180 form a disulfide.

It belongs to the NGF-beta family.

The protein localises to the secreted. Functionally, promotes the survival of neuronal populations that are all located either in the central nervous system or directly connected to it. In Morelia spilota (Carpet python), this protein is Neurotrophic factor BDNF precursor form (BDNF).